The following is a 445-amino-acid chain: ATP-dependent protease ATPase subunit HslU (445 aa).

Residues I17, 59 to 64 (GVGKTE), D254, E319, and R391 each bind ATP.

The protein belongs to the ClpX chaperone family. HslU subfamily. As to quaternary structure, a double ring-shaped homohexamer of HslV is capped on each side by a ring-shaped HslU homohexamer. The assembly of the HslU/HslV complex is dependent on binding of ATP.

The protein localises to the cytoplasm. Functionally, ATPase subunit of a proteasome-like degradation complex; this subunit has chaperone activity. The binding of ATP and its subsequent hydrolysis by HslU are essential for unfolding of protein substrates subsequently hydrolyzed by HslV. HslU recognizes the N-terminal part of its protein substrates and unfolds these before they are guided to HslV for hydrolysis. The polypeptide is ATP-dependent protease ATPase subunit HslU (Pseudomonas savastanoi pv. phaseolicola (strain 1448A / Race 6) (Pseudomonas syringae pv. phaseolicola (strain 1448A / Race 6))).